We begin with the raw amino-acid sequence, 336 residues long: Flavonoid 6-O-methyltransferase 4 (336 aa).

Residues Tyr-140 and Asp-203 each contribute to the S-adenosyl-L-methionine site. The active-site Proton acceptor is the His-241.

Belongs to the class I-like SAM-binding methyltransferase superfamily. Cation-independent O-methyltransferase family. Homodimer. Expressed in leaves.

It catalyses the reaction ladanein + S-adenosyl-L-methionine = salvigenin + S-adenosyl-L-homocysteine + H(+). The enzyme catalyses scutellarein 7-methyl ether + S-adenosyl-L-methionine = cirsimaritin + S-adenosyl-L-homocysteine + H(+). It participates in flavonoid metabolism. In terms of biological role, flavonoid 6-O-methyltransferase involved in the biosynthesis of polymethoxylated flavonoids natural products such as nevadensin and salvigenin (SALV), aroma compounds which contribute to the flavor of sweet basil, and exhibit pharmacological activities such as anti-allergic, anti-oxidant, antibacterial, anti-proliferative, and anti-inflammatory effects. Catalyzes S-adenosylmethionine-dependent regioselective 6-O-methylation of flavonoids; active on various hydroxylated flavonoid substrates, including scutellarein-7-methyl ether (SCU7Me) and ladanein (LAD). The sequence is that of Flavonoid 6-O-methyltransferase 4 from Ocimum basilicum (Sweet basil).